A 985-amino-acid polypeptide reads, in one-letter code: Regulator of telomere elongation helicase 1 homolog (985 aa).

The Helicase ATP-binding domain occupies 7–303 (AGIPVHFPFE…QDMAGDEPKD (297 aa)). 42 to 49 (SPTGTGKT) provides a ligand contact to ATP. [4Fe-4S] cluster contacts are provided by cysteine 146, cysteine 164, cysteine 173, and cysteine 209. The DEAH box motif lies at 252-255 (DEAH). Positions 863–883 (VKIHKRERSSPTAPESSSQVT) are disordered. Polar residues predominate over residues 872-882 (SPTAPESSSQV). Residue threonine 874 is modified to Phosphothreonine.

This sequence belongs to the helicase family. RAD3/XPD subfamily. Expressed in both male germline and somatic cells (at protein level). Expressed in ovarian germline stem cells (at protein level). Expressed in adult testes (at protein level). Expressed in the germarium including germline stem cells.

It is found in the nucleus. The protein localises to the chromosome. The catalysed reaction is ATP + H2O = ADP + phosphate + H(+). Its function is as follows. A probable ATP-dependent DNA helicase implicated in DNA repair and the maintenance of genomic stability. Acts as an anti-recombinase to counteract toxic recombination and limit crossover during meiosis. Regulates meiotic recombination and crossover homeostasis by physically dissociating strand invasion events and thereby promotes noncrossover repair by meiotic synthesis dependent strand annealing (SDSA) as well as disassembly of D loop recombination intermediates. In male germline stem cells (GSCs), plays a role in GSCs maintenance during larval germline development by modulating the expression of genes such as Stat92E and preventing DNA damage-induced checkpoint activation. May play a role in female germline stem cell maintenance. The sequence is that of Regulator of telomere elongation helicase 1 homolog from Drosophila melanogaster (Fruit fly).